The sequence spans 510 residues: Cobyric acid synthase (510 aa).

The GATase cobBQ-type domain occupies 262–460 (EIKVGIIKLP…IHGIFENDEW (199 aa)). Cys343 serves as the catalytic Nucleophile. The active site involves His452.

The protein belongs to the CobB/CobQ family. CobQ subfamily.

It functions in the pathway cofactor biosynthesis; adenosylcobalamin biosynthesis. In terms of biological role, catalyzes amidations at positions B, D, E, and G on adenosylcobyrinic A,C-diamide. NH(2) groups are provided by glutamine, and one molecule of ATP is hydrogenolyzed for each amidation. The protein is Cobyric acid synthase of Prochlorococcus marinus (strain MIT 9515).